A 282-amino-acid polypeptide reads, in one-letter code: Endonuclease V (282 aa).

Residues Asp52 and Asp126 each contribute to the Mg(2+) site. Residues Ser250–Cys282 are disordered.

The protein belongs to the endonuclease V family. Monomer. Interacts with PABPC1; the interaction is RNA-dependent and stimulates ENDOV activity. It depends on Mg(2+) as a cofactor.

The protein localises to the cytoplasm. It localises to the nucleus. It is found in the nucleolus. The protein resides in the stress granule. Inhibited by normal intracellular concentrations of ATP. Functionally, endoribonuclease that specifically cleaves inosine-containing RNAs: cleaves RNA at the second phosphodiester bond 3' to inosine. Active against both single-stranded and double-stranded RNAs. Has strong preference for single-stranded RNAs (ssRNAs) toward double-stranded RNAs (dsRNAs). Cleaves mRNAs and tRNAs containing inosine. Also able to cleave structure-specific dsRNA substrates containing the specific sites 5'-IIUI-3' and 5'-UIUU-3'. Inosine is present in a number of RNAs following editing; the function of inosine-specific endoribonuclease is still unclear: it could either play a regulatory role in edited RNAs, or be involved in antiviral response by removing the hyperedited long viral dsRNA genome that has undergone A-to-I editing. Binds branched DNA structures. Its function is as follows. Endoribonuclease that specifically cleaves inosine-containing RNAs: cleaves RNA at the second phosphodiester bond 3' to inosine. Active against both single-stranded and double-stranded RNAs. Cleaves tRNAs containing inosine. The protein is Endonuclease V (ENDOV) of Homo sapiens (Human).